We begin with the raw amino-acid sequence, 247 residues long: MHTQVLFEHPLNEKMRTWLRIEFLIQQLSINLPIADHAGALHFFRNISDLLDVFERGEVRTELLKELERQQRKLQAWVEVPGVDQDRIEALRQQLKSAGSVLISAPRIGQQLREDRLIALVRQRLSIPGGCCSFDLPTLHIWLHLQQPQRDAQIETWLASLNPLTQALTLVLDLIRNSAPFRKQTSLNGFYQDNGDDADLLRLILTLDSQLYPQISGHKSRFAIRFMPLDSENGLVPERLDFELACC.

This sequence belongs to the ZapD family. In terms of assembly, interacts with FtsZ.

It is found in the cytoplasm. Cell division factor that enhances FtsZ-ring assembly. Directly interacts with FtsZ and promotes bundling of FtsZ protofilaments, with a reduction in FtsZ GTPase activity. The sequence is that of Cell division protein ZapD from Salmonella arizonae (strain ATCC BAA-731 / CDC346-86 / RSK2980).